Reading from the N-terminus, the 267-residue chain is 7alpha-hydroxysteroid dehydrogenase (267 aa).

NADP(+) contacts are provided by residues 13–18 (SATRGI), R38, 63–64 (DA), and N90. Residues S145 and Y158 each coordinate cholate. NADP(+) contacts are provided by residues Y158, K162, and 191 to 195 (IATDA). Residue Y158 is the Proton acceptor of the active site.

The protein belongs to the short-chain dehydrogenases/reductases (SDR) family. In terms of assembly, homotetramer.

It carries out the reaction cholate + NADP(+) = 3alpha,12alpha-dihydroxy-7-oxo-5beta-cholanate + NADPH + H(+). The catalysed reaction is chenodeoxycholate + NADP(+) = 7-oxolithocholate + NADPH + H(+). In terms of biological role, 7alpha-hydroxysteroid dehydrogenase that catalyzes the NADP(+)-dependent oxidation of the 7alpha-hydroxy group of 7alpha-hydroxysteroids, such as the major human bile acids cholate and chenodeoxycholate, to the corresponding 7-oxosteroids. Is thus liley involved in the metabolism of primary bile acids. The polypeptide is 7alpha-hydroxysteroid dehydrogenase (Paraclostridium sordellii (Clostridium sordellii)).